A 202-amino-acid polypeptide reads, in one-letter code: NAD(P)H-quinone oxidoreductase subunit I (202 aa).

4Fe-4S ferredoxin-type domains are found at residues 55–84 and 95–124; these read GRIHYEFDKCIACEVCVRVCPINLPVVDWV and KNYSIDFGACIFCGNCVEYCPTNCLSMTEE. [4Fe-4S] cluster is bound by residues Cys64, Cys67, Cys70, Cys74, Cys104, Cys107, Cys110, and Cys114. A compositionally biased stretch (basic and acidic residues) spans 168-187; sequence EYDPHVVPSDRPRAGQRPEE. The tract at residues 168 to 202 is disordered; the sequence is EYDPHVVPSDRPRAGQRPEELVDQYKQAAAANEEN.

This sequence belongs to the complex I 23 kDa subunit family. As to quaternary structure, NDH-1 is composed of at least 11 different subunits. It depends on [4Fe-4S] cluster as a cofactor.

It localises to the cellular thylakoid membrane. It carries out the reaction a plastoquinone + NADH + (n+1) H(+)(in) = a plastoquinol + NAD(+) + n H(+)(out). It catalyses the reaction a plastoquinone + NADPH + (n+1) H(+)(in) = a plastoquinol + NADP(+) + n H(+)(out). NDH-1 shuttles electrons from an unknown electron donor, via FMN and iron-sulfur (Fe-S) centers, to quinones in the respiratory and/or the photosynthetic chain. The immediate electron acceptor for the enzyme in this species is believed to be plastoquinone. Couples the redox reaction to proton translocation, and thus conserves the redox energy in a proton gradient. The protein is NAD(P)H-quinone oxidoreductase subunit I of Synechococcus elongatus (strain ATCC 33912 / PCC 7942 / FACHB-805) (Anacystis nidulans R2).